A 5233-amino-acid chain; its full sequence is E3 ubiquitin-protein ligase highwire (5233 aa).

A disordered region spans residues 197–230 (VVGGPGLPAEKRPRRDSANSDADSDTEEPTEREP). A compositionally biased stretch (basic and acidic residues) spans 205–214 (AEKRPRRDSA). A phosphoserine mark is found at Ser213 and Ser216. 3 RCC1 repeats span residues 615–666 (NGRV…ALLV), 669–724 (DGTV…FVTK), and 768–818 (KGQL…DKRL). Residues 680 to 700 (RGEDGDSSKNRRQPKAVKPKK) form a disordered region. A compositionally biased stretch (basic residues) spans 689–700 (NRRQPKAVKPKK). Residues 900-950 (TELKPPPSDVQQRQQRSKTLIMRRKERKGELETGAAGGGAATPTDLDKDPP) are disordered. Residues 908–917 (DVQQRQQRSK) show a composition bias toward polar residues. RCC1 repeat units follow at residues 931–983 (ETGA…VLTL), 984–1033 (AGEV…LLTS), and 1035–1084 (GMVY…TVAP). Disordered stretches follow at residues 1051–1109 (LPSD…EMPP) and 1287–1327 (AAAA…PPQL). A compositionally biased stretch (polar residues) spans 1092 to 1103 (RSQSPANVQPSG). The segment covering 1287 to 1302 (AAAAAVAAPGTPVSAG) has biased composition (low complexity). Residues 1436-1587 (NRFDNFGGGW…GQIPAILYRL (152 aa)) are PHR domain 1. The tract at residues 1681 to 1718 (SSTSVATGGGSNAAHGSGVVTTAKSVQSKPNKDKNTPR) is disordered. Over residues 1699 to 1709 (VVTTAKSVQSK) the composition is skewed to polar residues. Residues 2014–2169 (ARFARCDVSR…GQLPCILYYS (156 aa)) form a PHR domain 2 region. Disordered regions lie at residues 2329 to 2353 (SADL…VPIN) and 2580 to 2604 (NGAG…NTHQ). A compositionally biased stretch (low complexity) spans 2336–2350 (QSQSVSQSQSQSQSV). The tract at residues 2885–4082 (AEVSAPGPNL…FVSSLNPTGG (1198 aa)) is required for interaction with Rae1. The Filamin repeat unit spans residues 2906–3000 (WGGMAPPPRI…LEEVYRVDVK (95 aa)). 6 disordered regions span residues 3005-3024 (PPPT…SKLR), 3117-3210 (KGVG…EPEQ), 3277-3333 (GGQD…ASET), 3348-3378 (TTTG…PMGP), 3551-3587 (PRLL…DLGR), and 3901-3936 (ASLA…APPV). A compositionally biased stretch (basic and acidic residues) spans 3176 to 3191 (KHADLAEREAQVQEER). Over residues 3192-3210 (EKEEEQVDDEDADDREPEQ) the composition is skewed to acidic residues. Residues 3282 to 3292 (PRGNGNRSQQE) are compositionally biased toward polar residues. A compositionally biased stretch (low complexity) spans 3348 to 3371 (TTTGQGEQQSELQLATTSTASSAS). Positions 3917–3932 (QHHQQQQMNLQLQQHQ) are enriched in low complexity. Residues 4195–4374 (HNQVHSVATG…KHQPHLRLSH (180 aa)) enclose the DOC domain. Disordered regions lie at residues 4633-4655 (ASTG…GAVL) and 4680-4702 (LRSR…ALPP). Residues 4638-4652 (SGSGGVSGSSSGNGG) are compositionally biased toward gly residues. Zn(2+) contacts are provided by Cys4991, Cys4994, Cys5009, His5011, His5014, Cys5017, Cys5038, Cys5041, Cys5101, and Cys5104. Residues 4991–5042 (CMICFVEALSCAPSIHLECGHVFHYHCCKAVLEKRWSGPRITFGFSLCPICK) form an RING-type; atypical zinc finger. The interval 5096 to 5231 (YAYYVCFKCQ…LGCGVCRNAQ (136 aa)) is tandem cysteine domain. Cys5115 is a catalytic residue. 7 residues coordinate Zn(2+): Cys5130, Cys5133, Cys5142, His5145, Cys5154, Cys5157, and Cys5158. Residue Cys5165 is part of the active site. Positions 5172, 5175, 5193, 5207, 5213, 5224, and 5227 each coordinate Zn(2+).

Belongs to the RING-Cys relay (RCR) family. Component of an E3 ubiquitin ligase complex composed of hiw, Rae1 and Fsn. Interacts with Rae1; the interaction with Rae1 may protect hiw from autophagy-mediated degradation. Express throughout the nervous system. Stage 13 embryos show expression in the central nervous system (CNS) at the longitudinal axon tracts around which the synaptic neuropil forms. Expression outside the CNS starts at stage 16 in presynaptic terminals at the periactive zone which surround the active zone. Expression at neuromuscular junctions (NMJ) and in the CNS is also seen in third instar larvae (at protein level).

The protein resides in the synapse. It localises to the cell projection. The protein localises to the axon. The catalysed reaction is [E2 ubiquitin-conjugating enzyme]-S-ubiquitinyl-L-cysteine + [acceptor protein]-L-threonine = [E2 ubiquitin-conjugating enzyme]-L-cysteine + [acceptor protein]-3-O-ubiquitinyl-L-threonine.. It participates in protein modification; protein ubiquitination. Atypical E3 ubiquitin-protein ligase which specifically mediates ubiquitination of threonine and serine residues on target proteins, instead of ubiquitinating lysine residues. Shows esterification activity towards both threonine and serine, with a preference for threonine, and acts via two essential catalytic cysteine residues that relay ubiquitin to its substrate via thioester intermediates. Required in the presynaptic motoneuron to down-regulate the levels of wnd and restrain synaptic terminal growth at the neuromuscular junction (NMJ) together with Rae1 and Fsn. This is E3 ubiquitin-protein ligase highwire from Drosophila melanogaster (Fruit fly).